The chain runs to 300 residues: Zinc finger protein RME1 (300 aa).

Residues glutamine 80 to glutamate 90 show a composition bias toward polar residues. Positions glutamine 80–glutamate 100 are disordered. C2H2-type zinc fingers lie at residues tyrosine 178–glutamate 199, cysteine 206–histidine 234, and leucine 256–histidine 281.

The protein resides in the nucleus. Functionally, involved in the control of meiosis. Represses the transcription of the IME1 gene thereby inhibiting cells from entering meiosis. But also activates the CLN2 gene thus promoting mitosis. The polypeptide is Zinc finger protein RME1 (RME1) (Saccharomyces cerevisiae (strain ATCC 204508 / S288c) (Baker's yeast)).